Here is a 407-residue protein sequence, read N- to C-terminus: Na(+)-translocating NADH-quinone reductase subunit F (407 aa).

A helical membrane pass occupies residues Ile-3–Phe-23. A 2Fe-2S ferredoxin-type domain is found at Gly-32–Val-126. Positions 69, 75, 78, and 110 each coordinate [2Fe-2S] cluster. Residues Val-129–Lys-269 form the FAD-binding FR-type domain. The tract at residues Asp-272–Met-389 is catalytic.

It belongs to the NqrF family. In terms of assembly, composed of six subunits; NqrA, NqrB, NqrC, NqrD, NqrE and NqrF. The cofactor is [2Fe-2S] cluster. FAD is required as a cofactor.

The protein localises to the cell inner membrane. It carries out the reaction a ubiquinone + n Na(+)(in) + NADH + H(+) = a ubiquinol + n Na(+)(out) + NAD(+). In terms of biological role, NQR complex catalyzes the reduction of ubiquinone-1 to ubiquinol by two successive reactions, coupled with the transport of Na(+) ions from the cytoplasm to the periplasm. The first step is catalyzed by NqrF, which accepts electrons from NADH and reduces ubiquinone-1 to ubisemiquinone by a one-electron transfer pathway. The sequence is that of Na(+)-translocating NADH-quinone reductase subunit F from Pasteurella multocida (strain Pm70).